A 176-amino-acid chain; its full sequence is Large ribosomal subunit protein eL6A (176 aa).

Ser-2 carries the post-translational modification N-acetylserine. At Ser-12 the chain carries Phosphoserine. Residue Lys-128 forms a Glycyl lysine isopeptide (Lys-Gly) (interchain with G-Cter in ubiquitin) linkage.

This sequence belongs to the eukaryotic ribosomal protein eL6 family. In terms of assembly, component of the large ribosomal subunit (LSU). Mature yeast ribosomes consist of a small (40S) and a large (60S) subunit. The 40S small subunit contains 1 molecule of ribosomal RNA (18S rRNA) and 33 different proteins (encoded by 57 genes). The large 60S subunit contains 3 rRNA molecules (25S, 5.8S and 5S rRNA) and 46 different proteins (encoded by 81 genes). Post-translationally, N-terminally acetylated by acetyltransferase NatA.

The protein resides in the cytoplasm. In terms of biological role, component of the ribosome, a large ribonucleoprotein complex responsible for the synthesis of proteins in the cell. The small ribosomal subunit (SSU) binds messenger RNAs (mRNAs) and translates the encoded message by selecting cognate aminoacyl-transfer RNA (tRNA) molecules. The large subunit (LSU) contains the ribosomal catalytic site termed the peptidyl transferase center (PTC), which catalyzes the formation of peptide bonds, thereby polymerizing the amino acids delivered by tRNAs into a polypeptide chain. The nascent polypeptides leave the ribosome through a tunnel in the LSU and interact with protein factors that function in enzymatic processing, targeting, and the membrane insertion of nascent chains at the exit of the ribosomal tunnel. This Saccharomyces cerevisiae (strain ATCC 204508 / S288c) (Baker's yeast) protein is Large ribosomal subunit protein eL6A.